Reading from the N-terminus, the 155-residue chain is Protein-export protein SecB 1 (155 aa).

Belongs to the SecB family. As to quaternary structure, homotetramer, a dimer of dimers. One homotetramer interacts with 1 SecA dimer.

The protein localises to the cytoplasm. In terms of biological role, one of the proteins required for the normal export of preproteins out of the cell cytoplasm. It is a molecular chaperone that binds to a subset of precursor proteins, maintaining them in a translocation-competent state. It also specifically binds to its receptor SecA. The polypeptide is Protein-export protein SecB 1 (Polaromonas naphthalenivorans (strain CJ2)).